The chain runs to 38 residues: Turripeptide GpIAa (38 aa).

The protein belongs to the turripeptide family. In terms of tissue distribution, expressed by the venom duct.

It is found in the secreted. This Cryptogemma periscelida (Atlantic gem-turris) protein is Turripeptide GpIAa.